The sequence spans 428 residues: MGPLSAPPCTQRITWKGLLLTALLLNFWNLPTTAQVTIEAEPTKVSKGKDVLLLVHNLPQNLAGYIWYKGQMKDLYHYITSYVVDGQIIIYGPAYSGRETVYSNASLLIQNVTREDAGSYTLHIVKRGDGTRGETGHFTFTLYLETPKPSISSSNLYPREDMEAVSLTCDPETPDASYLWWMNGQSLPMTHSLQLSKNKRTLFLFGVTKYTAGPYECEIRNPVSASRSDPVTLNLLPKLPKPYITINNLNPRENKDVLAFTCEPKSENYTYIWWLNGQSLPVSPRVKRPIENRILILPSVTRNETGPYQCEIQDRYGGIRSYPVTLNVLYGPDLPRIYPSFTYYHSGENLYLSCFADSNPPAEYSWTINGKFQLSGQKLFIPQITTKHSGLYACSVRNSATGMESSKSMTVKVSAPSGTGHLPGLNPL.

Residues 1-34 (MGPLSAPPCTQRITWKGLLLTALLLNFWNLPTTA) form the signal peptide. Residues 35–144 (QVTIEAEPTK…TGHFTFTLYL (110 aa)) form the Ig-like V-type domain. 2 N-linked (GlcNAc...) asparagine glycosylation sites follow: Asn104 and Asn111. The Cell attachment site signature appears at 127-129 (RGD). Ig-like C2-type domains follow at residues 147 to 234 (PKPS…VTLN), 240 to 327 (PKPY…VTLN), and 335 to 410 (PRIY…KSMT). Disulfide bonds link Cys169-Cys217, Cys262-Cys310, and Cys354-Cys394. Residues Asn268 and Asn303 are each glycosylated (N-linked (GlcNAc...) asparagine).

It belongs to the immunoglobulin superfamily. CEA family.

Its subcellular location is the secreted. The protein is Pregnancy-specific beta-1-glycoprotein 3 (PSG3) of Homo sapiens (Human).